An 877-amino-acid chain; its full sequence is EF-hand domain-containing family member B (877 aa).

2 disordered regions span residues 1-47 (MCSF…GRKS) and 268-290 (AQQP…PDRI). 2 consecutive EF-hand domains span residues 605–640 (QNFD…ACLH) and 641–676 (LDEK…KDKT). Ca(2+) is bound by residues Asp-618, Asp-622, Glu-629, Asp-654, Asp-656, Asp-658, and Glu-665.

In terms of assembly, microtubule inner protein component of sperm flagellar doublet microtubules. Interacts with STIM1 and ORAI1; the interactions take place upon Ca(2+)-store depletion and dissociate through a Ca(2+)-dependent mechanism. Interaction with STIM1 inhibits STIM1 interaction with SARAF. As to expression, expressed in trachea multiciliated cells.

Its subcellular location is the cytoplasm. The protein resides in the cytoskeleton. It is found in the cilium axoneme. The protein localises to the flagellum axoneme. Microtubule inner protein (MIP) part of the dynein-decorated doublet microtubules (DMTs) in cilia axoneme, which is required for motile cilia beating. Cytosolic sensor for calcium, modulates the interaction of STIM1 and ORAI1 upon store depletion and the activation of store-operated Ca(2+) entry (SOCE) and NFAT translocation from cytosol to nucleus. This is EF-hand domain-containing family member B from Bos taurus (Bovine).